Here is a 124-residue protein sequence, read N- to C-terminus: Prefoldin subunit beta (124 aa).

Belongs to the prefoldin subunit beta family. As to quaternary structure, heterohexamer of two alpha and four beta subunits.

It is found in the cytoplasm. Molecular chaperone capable of stabilizing a range of proteins. Seems to fulfill an ATP-independent, HSP70-like function in archaeal de novo protein folding. In Thermoplasma acidophilum (strain ATCC 25905 / DSM 1728 / JCM 9062 / NBRC 15155 / AMRC-C165), this protein is Prefoldin subunit beta (pfdB).